Reading from the N-terminus, the 660-residue chain is Oligopeptide-binding protein AliA (660 aa).

Positions 1–22 (MKSSKLFALAGVTLLAATTLAA) are cleaved as a signal peptide. Cysteine 23 is lipidated: N-palmitoyl cysteine. A lipid anchor (S-diacylglycerol cysteine) is attached at cysteine 23. Residues 638–660 (EKWMKEKEESNKKAQEDLAKHVK) are disordered.

It belongs to the bacterial solute-binding protein 5 family.

It localises to the cell membrane. In terms of biological role, part of the binding-protein-dependent transport system for oligopeptides; probably an oligopeptide binding protein. The sequence is that of Oligopeptide-binding protein AliA (aliA) from Streptococcus pneumoniae serotype 4 (strain ATCC BAA-334 / TIGR4).